We begin with the raw amino-acid sequence, 279 residues long: Methyltransferase trt5 (279 aa).

S-adenosyl-L-methionine contacts are provided by residues 124-125 and 152-153; these read DI and DV.

This sequence belongs to the class I-like SAM-binding methyltransferase superfamily. Homodimer.

Its pathway is secondary metabolite biosynthesis; terpenoid biosynthesis. Methyltransferase; part of the gene cluster that mediates the biosynthesis of terretonin, a fungal meroterpenoid that acts as a mycotoxin. The first step of the pathway is the synthesis of 3,5-dimethylorsellinic acid (DMOA) by the polyketide synthase trt4. DMOA is then prenylated into farnesyl-DMOA by the polyprenyl transferase trt2. Methylation by the methyltransferase trt5 then leads to farnesyl-DMOA methyl ester which is further subject to epoxidation by the FAD-dependent monooxygenase trt8 to yield epoxyfarnesyl-DMOA methyl ester. Cyclization of epoxyfarnesyl-DMOA methyl ester by the terpene cyclase trt1 leads to a tetracycle intermediate which is in turn converted to preterretonin. Dehydrogenase trt9 comes next to transform preterretonin to preterrenoid. The FAD-dependent monooxygenase trt3 is then required for the C-hydroxylation at C16 of preterrenoid to yield terrenoid. The cytochrome P450 trt6 catalyzes three successive oxidations to transform terrenoid into an unstable intermediate, which then undergoes the D-ring expansion and unusual rearrangement of the methoxy group to afford the core skeleton of terretonin. Trt14 catalyzes the D-ring expansion of terretonin involving intramolecular methoxy rearrangement as well as the hydrolysis of the expanded D-ring and the methyl ester moiety. Finally, the nonheme iron-dependent dioxygenase trt7 accomplishes the last two oxidation reactions steps to complete the biosynthesis of terretonin. Terretonin C is produced via spontaneous decarboxylation of the terretonin precursor. Another shunt product of the terretonin biosynthesis is dihydrofarnesyl-DMOA, derived from epoxyfarnesyl-DMOA through hydrolysis of the epoxide. This chain is Methyltransferase trt5, found in Aspergillus terreus (strain NIH 2624 / FGSC A1156).